Consider the following 183-residue polypeptide: Negative modulator of initiation of replication (183 aa).

The interaction with DNA stretch occupies residues 90–91 (AV).

Belongs to the SeqA family. In terms of assembly, homodimer. Polymerizes to form helical filaments.

It is found in the cytoplasm. Its function is as follows. Negative regulator of replication initiation, which contributes to regulation of DNA replication and ensures that replication initiation occurs exactly once per chromosome per cell cycle. Binds to pairs of hemimethylated GATC sequences in the oriC region, thus preventing assembly of replication proteins and re-initiation at newly replicated origins. Repression is relieved when the region becomes fully methylated. The protein is Negative modulator of initiation of replication of Shewanella oneidensis (strain ATCC 700550 / JCM 31522 / CIP 106686 / LMG 19005 / NCIMB 14063 / MR-1).